Here is a 728-residue protein sequence, read N- to C-terminus: Magnetosome formation protease MamE (728 aa).

Topologically, residues 1–21 (MAMFNGDVEDGGRGDASCGKD) are cytoplasmic. The chain crosses the membrane as a helical span at residues 22 to 42 (LKRYLMLMGVVALVVLFGAFI). Residues 43 to 728 (YRQSSGGLRL…RNGQEFWIVL (686 aa)) are Lumenal-facing. Active-site charge relay system residues include H188, D221, and S297. Residues 375–398 (IFAGTRAPHTDGRQNMDCTTCHDL) carry the MCR (magnetochrome) 1 motif. Heme contacts are provided by C392, C395, H396, C438, C441, and H442. The MCR 2 motif lies at 421 to 444 (IPMGAVSPHTDGRQNMNCANCHQM). PDZ domains follow at residues 471–573 (AINI…LRDG) and 622–721 (PAVM…NRNG).

This sequence in the N-terminal section; belongs to the peptidase S1C family. As to quaternary structure, might interact with MamB via PDZ1. Requires heme as cofactor. In terms of processing, subject to autocatalytic cleavage; cleavage also requires MamO.

It localises to the magnetosome membrane. Autoproteolysis is stimulated by exogenous substrates or peptides that bind to its PDZ domains; may be stimulated by an environmental cue in vivo. Protease activity is tightly regulated; increasing its activity decreases substrate levels and disturbs biomineralization. In terms of biological role, acts at 2 distinct steps of magnetosome formation; required for correct localization of proteins to the magnetosome while the protease activity is required for maturation of small magnetite crystals into larger, functional ones. The 2 functions are separable by mutation. Probably cleaves at least itself, MamO and MamP; cleavage requires the putative transport domain of MamO. Involved in localization of some proteins (at least MamA, MamC, MamF, MamI and MamJ) to the magnetosome. The protein is Magnetosome formation protease MamE (mamE) of Paramagnetospirillum magneticum (strain ATCC 700264 / AMB-1) (Magnetospirillum magneticum).